Consider the following 100-residue polypeptide: Aspartyl/glutamyl-tRNA(Asn/Gln) amidotransferase subunit C (100 aa).

The protein belongs to the GatC family. As to quaternary structure, heterotrimer of A, B and C subunits.

It catalyses the reaction L-glutamyl-tRNA(Gln) + L-glutamine + ATP + H2O = L-glutaminyl-tRNA(Gln) + L-glutamate + ADP + phosphate + H(+). The catalysed reaction is L-aspartyl-tRNA(Asn) + L-glutamine + ATP + H2O = L-asparaginyl-tRNA(Asn) + L-glutamate + ADP + phosphate + 2 H(+). In terms of biological role, allows the formation of correctly charged Asn-tRNA(Asn) or Gln-tRNA(Gln) through the transamidation of misacylated Asp-tRNA(Asn) or Glu-tRNA(Gln) in organisms which lack either or both of asparaginyl-tRNA or glutaminyl-tRNA synthetases. The reaction takes place in the presence of glutamine and ATP through an activated phospho-Asp-tRNA(Asn) or phospho-Glu-tRNA(Gln). This Streptococcus equi subsp. zooepidemicus (strain MGCS10565) protein is Aspartyl/glutamyl-tRNA(Asn/Gln) amidotransferase subunit C.